The chain runs to 343 residues: Protein RecA (343 aa).

ATP is bound at residue Gly-66–Thr-73.

The protein belongs to the RecA family.

The protein localises to the cytoplasm. In terms of biological role, can catalyze the hydrolysis of ATP in the presence of single-stranded DNA, the ATP-dependent uptake of single-stranded DNA by duplex DNA, and the ATP-dependent hybridization of homologous single-stranded DNAs. It interacts with LexA causing its activation and leading to its autocatalytic cleavage. This chain is Protein RecA, found in Rickettsia bellii (strain RML369-C).